The chain runs to 848 residues: Adenylate cyclase (848 aa).

A catalytic region spans residues 1 to 535; it reads MYLYIETLKQ…DVSHHFPLRL (535 aa). Positions 541–848 are regulatory; that stretch reads KALYSPCEIR…DAPLLQQYFS (308 aa). His609 carries the phosphohistidine; by CRR modification.

It belongs to the adenylyl cyclase class-1 family.

The protein localises to the cytoplasm. The enzyme catalyses ATP = 3',5'-cyclic AMP + diphosphate. The protein is Adenylate cyclase (cyaA) of Salmonella typhi.